Here is a 101-residue protein sequence, read N- to C-terminus: Apolipoprotein C-II (101 aa).

The signal sequence occupies residues 1–22 (MGARHLLALLLVLLVLGFEVQG). The segment at 66–74 (TMDEKIRDM) is lipid binding. Positions 78 to 101 (STAAVSTYVGIFTDQLLSLLKGDE) are lipoprotein lipase cofactor.

This sequence belongs to the apolipoprotein C2 family. Post-translationally, proapolipoprotein C-II is synthesized as a sialic acid containing glycoprotein which is subsequently desialylated prior to its proteolytic processing. In terms of processing, proapolipoprotein C-II, the major form found in plasma undergoes proteolytic cleavage of its N-terminal hexapeptide to generate apolipoprotein C-II, which occurs as the minor form in plasma.

It localises to the secreted. Functionally, component of chylomicrons, very low-density lipoproteins (VLDL), low-density lipoproteins (LDL), and high-density lipoproteins (HDL) in plasma. Plays an important role in lipoprotein metabolism as an activator of lipoprotein lipase. Both proapolipoprotein C-II and apolipoprotein C-II can activate lipoprotein lipase. The sequence is that of Apolipoprotein C-II (APOC2) from Tapirus indicus (Asiatic tapir).